The primary structure comprises 440 residues: RNA polymerase II C-terminal domain phosphatase-like 4 (440 aa).

A compositionally biased stretch (low complexity) spans 1 to 36 (MSVASDSPVHSSSSSDDLAAFLDAELDSASDASSGP). The interval 1 to 49 (MSVASDSPVHSSSSSDDLAAFLDAELDSASDASSGPSEEEEAEDDVESG) is disordered. The segment covering 37 to 47 (SEEEEAEDDVE) has biased composition (acidic residues). Residues 118–292 (QRQRKLYLVL…DHRYKSLSEL (175 aa)) form the FCP1 homology domain. Positions 337 to 429 (VRKEILKGCK…MKQPEENFGL (93 aa)) constitute a BRCT domain.

In terms of assembly, interacts with RAP74. Mg(2+) serves as cofactor. It depends on Co(2+) as a cofactor. The cofactor is Mn(2+).

Its subcellular location is the nucleus. The catalysed reaction is O-phospho-L-seryl-[protein] + H2O = L-seryl-[protein] + phosphate. The enzyme catalyses O-phospho-L-threonyl-[protein] + H2O = L-threonyl-[protein] + phosphate. Its function is as follows. Processively dephosphorylates 'Ser-2' and/or 'Ser-5' of the heptad repeats YSPTSPS in the C-terminal domain of the largest RNA polymerase II subunit (RPB1). This promotes the activity of RNA polymerase II. Required for normal plant growth. The protein is RNA polymerase II C-terminal domain phosphatase-like 4 (CPL4) of Arabidopsis thaliana (Mouse-ear cress).